The sequence spans 1653 residues: Cortactin-binding protein 2 (1653 aa).

5 disordered regions span residues 1-27 (MATD…AEAA), 203-222 (KKKT…RSTE), 268-297 (QLKR…SVGT), 314-339 (ESTE…KGSV), and 356-609 (HGDL…PSID). The stretch at 119–276 (RKMQERMSTQ…EQLKRGSDSK (158 aa)) forms a coiled coil. Residues 379 to 389 (GPSTGSPPDLT) are compositionally biased toward polar residues. Residues 390-408 (SSAAQSPAAAPHGLPPAHG) show a composition bias toward low complexity. Composition is skewed to polar residues over residues 444 to 470 (GNAN…TSRD), 478 to 490 (ARNT…SRFT), and 573 to 584 (TVASSPPSSLPQ). Arg488 is subject to Asymmetric dimethylarginine. ANK repeat units follow at residues 700 to 730 (GRPT…DINY), 734 to 763 (DGHS…QVNA), 767 to 796 (NGFT…HINH), 800 to 829 (GGQT…DRSV), and 833 to 862 (DGWT…PAHG). Residues 860-892 (AHGNSLNEEEPESDASDLDEGEESSEGKSKPVV) form a disordered region. The segment covering 866–883 (NEEEPESDASDLDEGEES) has biased composition (acidic residues). Residues 903-933 (EGWTAAHIAASKGFKNCLEILCRHRGLEPER) form an ANK 6 repeat. A disordered region spans residues 1441 to 1472 (ESGAWRKVNTSPRRKSGRFSSPTWNKPDLSNE). Phosphoserine is present on Ser1514. The segment at 1545 to 1653 (DLRTFDSSGN…KNEHIEKLNK (109 aa)) is disordered. Polar residues-rich tracts occupy residues 1549–1564 (FDSS…TANN) and 1572–1589 (KEVS…SNNK). A compositionally biased stretch (low complexity) spans 1614-1628 (SQNTKRSSSSSNTRQ). Basic and acidic residues predominate over residues 1635 to 1653 (SKEENWNLHKNEHIEKLNK).

As to quaternary structure, interacts with CTTN/cortactin SH3 domain. Interacts with STRN, STRN4/zinedin and MOB4/phocein; this interactions mediate the association with the STRIPAK core complex and may regulate dendritic spine distribution of the STRIPAK complex in hippocampal neurons. Activation of glutamate receptors weakens the interaction with STRN and STRN4.

It localises to the cytoplasm. It is found in the cell cortex. The protein localises to the cell projection. Its subcellular location is the dendritic spine. Its function is as follows. Regulates the dendritic spine distribution of CTTN/cortactin in hippocampal neurons, and thus controls dendritic spinogenesis and dendritic spine maintenance. Associates with the striatin-interacting phosphatase and kinase (STRIPAK) core complex to regulate dendritic spine distribution of the STRIPAK complex in hippocampal neurons. The sequence is that of Cortactin-binding protein 2 (CTTNBP2) from Eulemur macaco macaco (Black lemur).